The chain runs to 218 residues: Serine/threonine-protein phosphatase 2 (218 aa).

The Mn(2+) site is built by aspartate 22, histidine 24, aspartate 51, and asparagine 77. The active-site Proton donor is histidine 78. Mn(2+) is bound at residue histidine 187.

It belongs to the PPP phosphatase family. It depends on Mn(2+) as a cofactor.

The enzyme catalyses O-phospho-L-seryl-[protein] + H2O = L-seryl-[protein] + phosphate. The catalysed reaction is O-phospho-L-threonyl-[protein] + H2O = L-threonyl-[protein] + phosphate. Its function is as follows. Has been shown, in vitro, to act on Ser, Thr and Tyr-phosphorylated substrates. This Escherichia coli (strain K12) protein is Serine/threonine-protein phosphatase 2 (pphB).